The following is a 438-amino-acid chain: GTPase Der (438 aa).

2 consecutive EngA-type G domains span residues 4–168 (PVVA…DDNS) and 177–352 (TKVC…NNYS). GTP-binding positions include 10–17 (GRANVGKS), 57–61 (DTGGL), 120–123 (NKID), 183–190 (GKPNVGKS), 230–234 (DTAGL), and 295–298 (NKWD). One can recognise a KH-like domain in the interval 353-437 (MRISTGVLND…PLQFEFKTRG (85 aa)).

The protein belongs to the TRAFAC class TrmE-Era-EngA-EngB-Septin-like GTPase superfamily. EngA (Der) GTPase family. As to quaternary structure, associates with the 50S ribosomal subunit.

In terms of biological role, GTPase that plays an essential role in the late steps of ribosome biogenesis. This Finegoldia magna (strain ATCC 29328 / DSM 20472 / WAL 2508) (Peptostreptococcus magnus) protein is GTPase Der.